Here is an 87-residue protein sequence, read N- to C-terminus: Probable Fe(2+)-trafficking protein (87 aa).

It belongs to the Fe(2+)-trafficking protein family.

Functionally, could be a mediator in iron transactions between iron acquisition and iron-requiring processes, such as synthesis and/or repair of Fe-S clusters in biosynthetic enzymes. In Francisella tularensis subsp. mediasiatica (strain FSC147), this protein is Probable Fe(2+)-trafficking protein.